We begin with the raw amino-acid sequence, 650 residues long: Outer capsid protein VP4 (650 aa).

Glycine 2 carries N-myristoyl glycine; by host lipidation. N-linked (GlcNAc...) asparagine; by host glycans are attached at residues asparagine 110, asparagine 407, and asparagine 493.

Belongs to the aquareoviridae outer capsid VP4 protein family. In terms of assembly, interacts with VP6 and VP7. Cleaved during the endosomal proteolytic disassembly of the outer capsid. Post-translationally, N-terminally myristoylated. This acylation is essential for the membrane fusion activity.

Its subcellular location is the virion. Functionally, interacts with VP7 to form the outer icosahedral capsid with an incomplete T=13 symmetry, about 80 nm in diameter, and consisting of 200 VP4-VP7 trimers. Myristoylated N-terminal peptide may be released in the endosome and involved in permeabilization and delivery of transcriptionally active viral particles into the host cell cytoplasm (Potential). This chain is Outer capsid protein VP4 (S6), found in Ctenopharyngodon idella (Grass carp).